Consider the following 351-residue polypeptide: DNA polymerase IV (351 aa).

Residues 4–185 (IIHVDMDCFF…LPLAKIPGVG (182 aa)) form the UmuC domain. Mg(2+) is bound by residues aspartate 8 and aspartate 103. Glutamate 104 is an active-site residue.

It belongs to the DNA polymerase type-Y family. Monomer. Mg(2+) is required as a cofactor.

The protein localises to the cytoplasm. It carries out the reaction DNA(n) + a 2'-deoxyribonucleoside 5'-triphosphate = DNA(n+1) + diphosphate. Its function is as follows. Poorly processive, error-prone DNA polymerase involved in untargeted mutagenesis. Copies undamaged DNA at stalled replication forks, which arise in vivo from mismatched or misaligned primer ends. These misaligned primers can be extended by PolIV. Exhibits no 3'-5' exonuclease (proofreading) activity. May be involved in translesional synthesis, in conjunction with the beta clamp from PolIII. The polypeptide is DNA polymerase IV (Escherichia coli O9:H4 (strain HS)).